Reading from the N-terminus, the 725-residue chain is Ribosomal RNA large subunit methyltransferase K/L (725 aa).

Positions 45–156 (SGYRACLWSR…RGRLSLGIDL (112 aa)) constitute a THUMP domain.

This sequence belongs to the methyltransferase superfamily. RlmKL family.

The protein localises to the cytoplasm. The enzyme catalyses guanosine(2445) in 23S rRNA + S-adenosyl-L-methionine = N(2)-methylguanosine(2445) in 23S rRNA + S-adenosyl-L-homocysteine + H(+). It carries out the reaction guanosine(2069) in 23S rRNA + S-adenosyl-L-methionine = N(2)-methylguanosine(2069) in 23S rRNA + S-adenosyl-L-homocysteine + H(+). Functionally, specifically methylates the guanine in position 2445 (m2G2445) and the guanine in position 2069 (m7G2069) of 23S rRNA. This is Ribosomal RNA large subunit methyltransferase K/L from Marinobacter nauticus (strain ATCC 700491 / DSM 11845 / VT8) (Marinobacter aquaeolei).